Reading from the N-terminus, the 248-residue chain is Flavodoxin/ferredoxin--NADP reductase (248 aa).

In terms of domain architecture, FAD-binding FR-type spans Ala-2–Asp-101. FAD is bound by residues Arg-50 to Ser-53, Tyr-66, Lys-74 to Ser-76, and Thr-116. NADP(+) is bound by residues Ala-143–Arg-144, Ser-173–Arg-174, Arg-184, Asn-214–Gln-216, and Asp-220. Position 247–248 (Tyr-247–Trp-248) interacts with FAD.

The protein belongs to the ferredoxin--NADP reductase type 1 family. The cofactor is FAD.

Its subcellular location is the cytoplasm. The enzyme catalyses 2 reduced [2Fe-2S]-[ferredoxin] + NADP(+) + H(+) = 2 oxidized [2Fe-2S]-[ferredoxin] + NADPH. The catalysed reaction is reduced [flavodoxin] + NADP(+) = oxidized [flavodoxin] + NADPH + 2 H(+). Its function is as follows. Transports electrons between flavodoxin or ferredoxin and NADPH. This chain is Flavodoxin/ferredoxin--NADP reductase (fpr), found in Shigella flexneri.